A 529-amino-acid polypeptide reads, in one-letter code: V-set and immunoglobulin domain-containing protein 10 (529 aa).

An N-terminal signal peptide occupies residues 1-18 (MMITSAVVLYLLLLSHQT). Ig-like C2-type domains lie at 19-110 (VSEE…QTLS) and 129-217 (PATF…QELL). The Extracellular portion of the chain corresponds to 21–411 (EEQVQQFVIG…LNVKTSAGNG (391 aa)). Asn34, Asn35, Asn46, Asn135, Asn147, Asn159, Asn211, Asn269, Asn280, Asn284, Asn330, Asn357, and Asn376 each carry an N-linked (GlcNAc...) asparagine glycan. Cys40 and Cys96 are oxidised to a cystine. Residues Cys150 and Cys199 are joined by a disulfide bond. Residues 317 to 403 (PTGQPLATAL…GARELEVYLN (87 aa)) form the Ig-like C2-type 3 domain. The cysteines at positions 335 and 387 are disulfide-linked. A helical transmembrane segment spans residues 412–432 (GAIVGIFVSVLVMMIGIVVGV). The Cytoplasmic segment spans residues 433–529 (TVYTKRDRIC…PQRAELQPAV (97 aa)).

The protein localises to the membrane. This chain is V-set and immunoglobulin domain-containing protein 10 (vsig10), found in Danio rerio (Zebrafish).